Here is a 1111-residue protein sequence, read N- to C-terminus: Histone deacetylase 5 (1111 aa).

A Glycyl lysine isopeptide (Lys-Gly) (interchain with G-Cter in SUMO2) cross-link involves residue lysine 35. 3 disordered regions span residues 40–63, 107–136, and 187–272; these read GAMP…RGAL, RQHE…EQQR, and KEPT…SSPL. Residues 238-249 show a composition bias toward basic and acidic residues; it reads DSRDDFPLRKTA. Serine 250 carries the post-translational modification Phosphoserine; by AMPK, CaMK1, SIK1 and PKD/PRKD1. Positions 263 to 272 are enriched in basic and acidic residues; sequence KVAERRSSPL. Threonine 283 is subject to Phosphothreonine; by PKC. The segment at 474–495 is disordered; the sequence is TVGKLPRHRPLSRTQSSPLPQS. Over residues 485–495 the composition is skewed to low complexity; the sequence is SRTQSSPLPQS. Serine 489 carries the phosphoserine; by AMPK, CaMK1, SIK1 and PKD/PRKD1 modification. Lysine 524 is modified (N6-acetyllysine). Disordered stretches follow at residues 527–611 and 645–666; these read TKTG…LEES and LGRT…DQPT. A compositionally biased stretch (acidic residues) spans 572–610; that stretch reads STQEDLEEEEDEEEEDEDCIQVKDEEGESGPDEGPDLEE. 2 positions are modified to phosphoserine: serine 600 and serine 650. The tract at residues 671-1017 is histone deacetylase; sequence TTGVVYDTFM…VSALLSVELQ (347 aa). Zn(2+) is bound by residues cysteine 685, cysteine 687, histidine 693, and cysteine 770. Histidine 822 is an active-site residue. The Nuclear export signal signature appears at 1070–1109; the sequence is EEAETVSAMALLSVGAEQAQAVATQEHSPRPAEEPMEQEP. The interval 1086-1111 is disordered; the sequence is EQAQAVATQEHSPRPAEEPMEQEPTL. Serine 1097 is subject to Phosphoserine.

Belongs to the histone deacetylase family. HD type 2 subfamily. Interacts with AHRR, BAHD1, BCOR, HDAC7, HDAC9, CTBP1, MEF2C, NCOR2, NRIP1, PHB2 and a 14-3-3 chaperone protein. Interacts with BCL6, DDIT3/CHOP, GRK5, KDM5B and MYOCD. Interacts with EP300 in the presence of TFAP2C. Interacts with ANKRA2. Interacts with CUL7 (as part of the 3M complex); negatively regulated by ANKRA2. Interacts with ZBTB7B; the interaction allows the recruitment of HDAC4 on CD8 loci for deacetylation and possible inhibition of CD8 genes expression. Interacts with RARA. Post-translationally, phosphorylated by AMPK, CaMK1, SIK1 and PRKD1 at Ser-250 and Ser-489. The phosphorylation is required for the export to the cytoplasm and inhibition. Phosphorylated by the PKC kinases PKN1 and PKN2, impairing nuclear import. Phosphorylated by GRK5, leading to nuclear export of HDAC5 and allowing MEF2-mediated transcription. Ubiquitinated. Polyubiquitination however does not lead to its degradation.

It is found in the nucleus. The protein resides in the cytoplasm. The enzyme catalyses N(6)-acetyl-L-lysyl-[histone] + H2O = L-lysyl-[histone] + acetate. Its function is as follows. Responsible for the deacetylation of lysine residues on the N-terminal part of the core histones (H2A, H2B, H3 and H4). Histone deacetylation gives a tag for epigenetic repression and plays an important role in transcriptional regulation, cell cycle progression and developmental events. Histone deacetylases act via the formation of large multiprotein complexes. Involved in muscle maturation by repressing transcription of myocyte enhancer MEF2C. During muscle differentiation, it shuttles into the cytoplasm, allowing the expression of myocyte enhancer factors. Serves as a corepressor of RARA and causes its deacetylation. In association with RARA, plays a role in the repression of microRNA-10a and thereby in the inflammatory response. The protein is Histone deacetylase 5 (HDAC5) of Cricetulus griseus (Chinese hamster).